The chain runs to 542 residues: MEVREVPLPATTKLAADYITGAFPAEKGFGYARTDDEAFRRRLIHLQTRTYDRHGLADYLQAYHRRFSASAATMNNIDKLRDENSVVIVGGQQAGLLTGPLYTIYKIITIIRLAKEQEQKLGVPVVPLFWIAGEDHDIAEVDHVYVVEDGEVKKVVYPHKLKEKQMAADVPLDRQLADAWIERVVKTYGETDVTNELLSFLAACLDDSHTFVDFFAAIVLRLFADDGLVVLNAGDASVRPLERRFFAALIDRHRDVTSAVLAQQEALRALGYAPLIEIAPNAANLFYYDGRERSLLHYDEESGLFRNKTGSVALTKQQLLELAEAKPACLSNNVVTRPLMQEYLLPTLAFIAGPGEIAYWAELKEVFALFGMEMPPVVPRLQATLVSRSLQTDLVDIGLEAADVLSGRLEAVKQQWLKATAEAPLTEAFAKAKADIEAAHRPLRELGVAIDRGLEGLVAKNAAIIQAQIEFLQQTLERALLSKHEVEWRKFWRVETSLRPNGAPQERVWNVFYYVNRYGFDFVEKLSAISNPGNGMHKIVYI.

Residues 458–487 are a coiled coil; sequence VAKNAAIIQAQIEFLQQTLERALLSKHEVE.

It belongs to the BshC family.

In terms of biological role, involved in bacillithiol (BSH) biosynthesis. May catalyze the last step of the pathway, the addition of cysteine to glucosamine malate (GlcN-Mal) to generate BSH. The polypeptide is Putative cysteine ligase BshC (Geobacillus thermodenitrificans (strain NG80-2)).